The following is a 213-amino-acid chain: MYQDKILVRQLGLQPYEAISQAMHNFTDMRDENSHDEIWLVEHYPVFTQGQAGKAEHILMPGDIPVVQSDRGGQVTYHGPGQQVMYVLLNLKRRKLGVRDLVTLLEQTVVNTLAEIGIEAHPRADAPGVYVGEKKICSLGLRIRRGCSFHGLALNVNMDLSPFLRINPCGYAGMEMAKITQWKEDATTDNIAPRLLANILALLNNPPYEYIAA.

The 176-residue stretch at 32-207 (ENSHDEIWLV…NILALLNNPP (176 aa)) folds into the BPL/LPL catalytic domain. Residues 71–78 (RGGQVTYH), 138–140 (SLG), and 151–153 (GLA) each bind substrate. Catalysis depends on Cys169, which acts as the Acyl-thioester intermediate.

It belongs to the LipB family.

Its subcellular location is the cytoplasm. It catalyses the reaction octanoyl-[ACP] + L-lysyl-[protein] = N(6)-octanoyl-L-lysyl-[protein] + holo-[ACP] + H(+). The protein operates within protein modification; protein lipoylation via endogenous pathway; protein N(6)-(lipoyl)lysine from octanoyl-[acyl-carrier-protein]: step 1/2. Functionally, catalyzes the transfer of endogenously produced octanoic acid from octanoyl-acyl-carrier-protein onto the lipoyl domains of lipoate-dependent enzymes. Lipoyl-ACP can also act as a substrate although octanoyl-ACP is likely to be the physiological substrate. The polypeptide is Octanoyltransferase (Salmonella paratyphi A (strain ATCC 9150 / SARB42)).